The following is a 355-amino-acid chain: Tetraacyldisaccharide 4'-kinase (355 aa).

Position 54 to 61 (54 to 61 (TVGGAGKT)) interacts with ATP.

It belongs to the LpxK family.

The enzyme catalyses a lipid A disaccharide + ATP = a lipid IVA + ADP + H(+). It participates in glycolipid biosynthesis; lipid IV(A) biosynthesis; lipid IV(A) from (3R)-3-hydroxytetradecanoyl-[acyl-carrier-protein] and UDP-N-acetyl-alpha-D-glucosamine: step 6/6. Transfers the gamma-phosphate of ATP to the 4'-position of a tetraacyldisaccharide 1-phosphate intermediate (termed DS-1-P) to form tetraacyldisaccharide 1,4'-bis-phosphate (lipid IVA). The polypeptide is Tetraacyldisaccharide 4'-kinase (Rhizobium rhizogenes (strain K84 / ATCC BAA-868) (Agrobacterium radiobacter)).